A 483-amino-acid chain; its full sequence is Protein nucleotidyltransferase YdiU (483 aa).

ATP-binding residues include G87, G89, R90, K110, D122, G123, R173, and R180. D249 (proton acceptor) is an active-site residue. Residues N250 and D259 each coordinate Mg(2+). D259 provides a ligand contact to ATP.

Belongs to the SELO family. Mg(2+) is required as a cofactor. Mn(2+) serves as cofactor.

The enzyme catalyses L-seryl-[protein] + ATP = 3-O-(5'-adenylyl)-L-seryl-[protein] + diphosphate. The catalysed reaction is L-threonyl-[protein] + ATP = 3-O-(5'-adenylyl)-L-threonyl-[protein] + diphosphate. It catalyses the reaction L-tyrosyl-[protein] + ATP = O-(5'-adenylyl)-L-tyrosyl-[protein] + diphosphate. It carries out the reaction L-histidyl-[protein] + UTP = N(tele)-(5'-uridylyl)-L-histidyl-[protein] + diphosphate. The enzyme catalyses L-seryl-[protein] + UTP = O-(5'-uridylyl)-L-seryl-[protein] + diphosphate. The catalysed reaction is L-tyrosyl-[protein] + UTP = O-(5'-uridylyl)-L-tyrosyl-[protein] + diphosphate. Nucleotidyltransferase involved in the post-translational modification of proteins. It can catalyze the addition of adenosine monophosphate (AMP) or uridine monophosphate (UMP) to a protein, resulting in modifications known as AMPylation and UMPylation. The protein is Protein nucleotidyltransferase YdiU of Yersinia pseudotuberculosis serotype O:1b (strain IP 31758).